The sequence spans 297 residues: Formylmethanofuran--tetrahydromethanopterin formyltransferase (297 aa).

Belongs to the FTR family. Homotetramer.

The protein resides in the cytoplasm. The catalysed reaction is N-formylmethanofuran + 5,6,7,8-tetrahydromethanopterin + H(+) = N(5)-formyl-5,6,7,8-tetrahydromethanopterin + methanofuran. The protein operates within one-carbon metabolism; methanogenesis from CO(2); 5,10-methenyl-5,6,7,8-tetrahydromethanopterin from CO(2): step 2/3. In terms of biological role, catalyzes the reversible transfer of a formyl group from formylmethanofuran (formyl-MFR) to tetrahydromethanopterin (H(4)MPT) to produce 5-formyl tetrahydromethanopterin (5-formyl-H(4)MPT) and methanofuran (MFR). This Methanothermobacter thermautotrophicus (strain ATCC 29096 / DSM 1053 / JCM 10044 / NBRC 100330 / Delta H) (Methanobacterium thermoautotrophicum) protein is Formylmethanofuran--tetrahydromethanopterin formyltransferase.